We begin with the raw amino-acid sequence, 136 residues long: 6,7-dimethyl-8-ribityllumazine synthase (136 aa).

Residues Phe11, 43 to 45 (SFD), and 67 to 69 (AVI) each bind 5-amino-6-(D-ribitylamino)uracil. 72–73 (ET) contacts (2S)-2-hydroxy-3-oxobutyl phosphate. The active-site Proton donor is the His75. 5-amino-6-(D-ribitylamino)uracil is bound at residue Leu100. Arg115 serves as a coordination point for (2S)-2-hydroxy-3-oxobutyl phosphate.

It belongs to the DMRL synthase family.

It carries out the reaction (2S)-2-hydroxy-3-oxobutyl phosphate + 5-amino-6-(D-ribitylamino)uracil = 6,7-dimethyl-8-(1-D-ribityl)lumazine + phosphate + 2 H2O + H(+). It participates in cofactor biosynthesis; riboflavin biosynthesis; riboflavin from 2-hydroxy-3-oxobutyl phosphate and 5-amino-6-(D-ribitylamino)uracil: step 1/2. Functionally, catalyzes the formation of 6,7-dimethyl-8-ribityllumazine by condensation of 5-amino-6-(D-ribitylamino)uracil with 3,4-dihydroxy-2-butanone 4-phosphate. This is the penultimate step in the biosynthesis of riboflavin. The chain is 6,7-dimethyl-8-ribityllumazine synthase from Picrophilus torridus (strain ATCC 700027 / DSM 9790 / JCM 10055 / NBRC 100828 / KAW 2/3).